The chain runs to 490 residues: Beta-1,3-glucan-binding protein 1 (490 aa).

Positions 1-19 are cleaved as a signal peptide; the sequence is MYKQTVVIFLLCFFICVSC. The CBM39 domain occupies 20-119; the sequence is YEVPPAKLEA…GEWTVTGYVD (100 aa). A GH16 domain is found at 152-490; that stretch reads PPTSQNTYPC…QVDYVRVYAL (339 aa). Asn-372 carries N-linked (GlcNAc...) asparagine glycosylation.

Belongs to the insect beta-1,3-glucan binding protein family. As to quaternary structure, monomer. As to expression, hemolymph.

The protein resides in the secreted. Plays a role in the recognition of invading microorganisms activating the phenoloxidase cascade. Binds specifically to beta-1,3-glucan. Binds the Aspergillus niger cell wall component alpha-1,3-glucan, a fungal pathogen-associated molecular pattern (PAMP) that activates the host immune response. This is Beta-1,3-glucan-binding protein 1 from Galleria mellonella (Greater wax moth).